The following is a 182-amino-acid chain: MNGFSTEEDSREGPPAAPAAAPGYGQSCCLIADGERCVRPAGNASFSKRVQKSISQKKLKLDIDKSVRHLYICDFHKNFIQSVRNKRKRKASDDGGDSPEHDADIPEVDLFQLQVNTLRRYKRHYKLQTRPGFNKAQLAETVSRHFRNIPVNEKETLAYFIYMVKSNRSRLDQKSEGSKQLE.

An N-acetylmethionine modification is found at M1. The span at 1–10 (MNGFSTEEDS) shows a compositional bias: acidic residues. The tract at residues 1-22 (MNGFSTEEDSREGPPAAPAAAP) is disordered. 2 disulfides stabilise this stretch: C28–C29 and C37–C73. The Atypical zinc-finger motif lies at 28–76 (CCLIADGERCVRPAGNASFSKRVQKSISQKKLKLDIDKSVRHLYICDFH). A Glycyl lysine isopeptide (Lys-Gly) (interchain with G-Cter in SUMO2) cross-link involves residue K48. Positions 84 to 103 (RNKRKRKASDDGGDSPEHDA) are disordered. Positions 85-90 (NKRKRK) match the Nuclear localization signal (NLS) motif. The segment at 87 to 89 (RKR) is important for DNA and phosphoinositide binding. Residues S92 and S98 each carry the phosphoserine modification. Glycyl lysine isopeptide (Lys-Gly) (interchain with G-Cter in SUMO2) cross-links involve residues K154, K165, and K174.

It belongs to the SAP30 family. As to quaternary structure, interacts with components of the histone deacetylase complex SIN3A, HDAC1 and HDAC2. Binds histones and nucleosomes. Interacts with FEZ1.

The protein resides in the nucleus. Its subcellular location is the nucleolus. Functions as a transcription repressor, probably via its interaction with histone deacetylase complexes. Involved in the functional recruitment of the class 1 Sin3-histone deacetylase complex (HDAC) to the nucleolus. Binds DNA, apparently without sequence-specificity, and bends bound double-stranded DNA. Binds phosphoinositol phosphates (phosphoinositol 3-phosphate, phosphoinositol 4-phosphate and phosphoinositol 5-phosphate) via the same basic sequence motif that mediates DNA binding and nuclear import. This chain is Histone deacetylase complex subunit SAP30L (Sap30l), found in Mus musculus (Mouse).